The following is a 549-amino-acid chain: Siroheme synthase (549 aa).

The tract at residues 1-203 is precorrin-2 dehydrogenase /sirohydrochlorin ferrochelatase; that stretch reads MNTFPLFFKL…GNENEALAQL (203 aa). NAD(+)-binding positions include 22–23 and 43–44; these read DV and PS. Ser128 bears the Phosphoserine mark. The tract at residues 247-549 is uroporphyrinogen-III C-methyltransferase; it reads GEVYIVGAGP…DGDLEQLIIG (303 aa). Residue Pro256 participates in S-adenosyl-L-methionine binding. Catalysis depends on Asp279, which acts as the Proton acceptor. The Proton donor role is filled by Lys301. S-adenosyl-L-methionine contacts are provided by residues 332–334, Ile337, 362–363, Met414, and Ala443; these read GGD and TA.

It in the N-terminal section; belongs to the precorrin-2 dehydrogenase / sirohydrochlorin ferrochelatase family. The protein in the C-terminal section; belongs to the precorrin methyltransferase family.

It catalyses the reaction uroporphyrinogen III + 2 S-adenosyl-L-methionine = precorrin-2 + 2 S-adenosyl-L-homocysteine + H(+). The enzyme catalyses precorrin-2 + NAD(+) = sirohydrochlorin + NADH + 2 H(+). The catalysed reaction is siroheme + 2 H(+) = sirohydrochlorin + Fe(2+). It participates in cofactor biosynthesis; adenosylcobalamin biosynthesis; precorrin-2 from uroporphyrinogen III: step 1/1. The protein operates within cofactor biosynthesis; adenosylcobalamin biosynthesis; sirohydrochlorin from precorrin-2: step 1/1. Its pathway is porphyrin-containing compound metabolism; siroheme biosynthesis; precorrin-2 from uroporphyrinogen III: step 1/1. It functions in the pathway porphyrin-containing compound metabolism; siroheme biosynthesis; siroheme from sirohydrochlorin: step 1/1. It participates in porphyrin-containing compound metabolism; siroheme biosynthesis; sirohydrochlorin from precorrin-2: step 1/1. In terms of biological role, multifunctional enzyme that catalyzes the SAM-dependent methylations of uroporphyrinogen III at position C-2 and C-7 to form precorrin-2 via precorrin-1. Then it catalyzes the NAD-dependent ring dehydrogenation of precorrin-2 to yield sirohydrochlorin. Finally, it catalyzes the ferrochelation of sirohydrochlorin to yield siroheme. The chain is Siroheme synthase from Psychrobacter arcticus (strain DSM 17307 / VKM B-2377 / 273-4).